A 575-amino-acid chain; its full sequence is Arginine--tRNA ligase (575 aa).

A 'HIGH' region motif is present at residues 131-141 (ANPTGPLHVGH).

The protein belongs to the class-I aminoacyl-tRNA synthetase family. In terms of assembly, monomer.

The protein localises to the cytoplasm. The enzyme catalyses tRNA(Arg) + L-arginine + ATP = L-arginyl-tRNA(Arg) + AMP + diphosphate. The protein is Arginine--tRNA ligase of Jannaschia sp. (strain CCS1).